Here is a 468-residue protein sequence, read N- to C-terminus: tRNA threonylcarbamoyladenosine dehydratase (468 aa).

Helical transmembrane passes span Phe-15–Phe-35, Asn-109–Ala-129, and Ile-315–Leu-335.

The protein belongs to the HesA/MoeB/ThiF family.

It is found in the mitochondrion outer membrane. In terms of biological role, catalyzes the ATP-dependent dehydration of threonylcarbamoyladenosine at position 37 (t(6)A37) to form cyclic t(6)A37 (ct(6)A37) in tRNAs that read codons beginning with adenine. This is tRNA threonylcarbamoyladenosine dehydratase (tcd1) from Schizosaccharomyces pombe (strain 972 / ATCC 24843) (Fission yeast).